The sequence spans 241 residues: tRNA pseudouridine synthase A (241 aa).

Asp53 serves as the catalytic Nucleophile. Tyr110 provides a ligand contact to substrate.

Belongs to the tRNA pseudouridine synthase TruA family. Homodimer.

It carries out the reaction uridine(38/39/40) in tRNA = pseudouridine(38/39/40) in tRNA. In terms of biological role, formation of pseudouridine at positions 38, 39 and 40 in the anticodon stem and loop of transfer RNAs. The chain is tRNA pseudouridine synthase A from Malacoplasma penetrans (strain HF-2) (Mycoplasma penetrans).